The primary structure comprises 638 residues: 1-deoxy-D-xylulose-5-phosphate synthase (638 aa).

Residues His-79 and 120-122 (AHS) contribute to the thiamine diphosphate site. A Mg(2+)-binding site is contributed by Asp-151. Thiamine diphosphate is bound by residues 152-153 (GA), Asn-180, Tyr-289, and Glu-371. Asn-180 contacts Mg(2+).

It belongs to the transketolase family. DXPS subfamily. Homodimer. Requires Mg(2+) as cofactor. Thiamine diphosphate is required as a cofactor.

It carries out the reaction D-glyceraldehyde 3-phosphate + pyruvate + H(+) = 1-deoxy-D-xylulose 5-phosphate + CO2. The protein operates within metabolic intermediate biosynthesis; 1-deoxy-D-xylulose 5-phosphate biosynthesis; 1-deoxy-D-xylulose 5-phosphate from D-glyceraldehyde 3-phosphate and pyruvate: step 1/1. Catalyzes the acyloin condensation reaction between C atoms 2 and 3 of pyruvate and glyceraldehyde 3-phosphate to yield 1-deoxy-D-xylulose-5-phosphate (DXP). This is 1-deoxy-D-xylulose-5-phosphate synthase from Rhizobium etli (strain CIAT 652).